The primary structure comprises 276 residues: UPF0328 protein ECU08_2080 (276 aa).

Residues 1–24 (MGIIDVQRSHLTATPSKERDAPAH) are disordered.

This sequence belongs to the UPF0328 family.

This chain is UPF0328 protein ECU08_2080, found in Encephalitozoon cuniculi (strain GB-M1) (Microsporidian parasite).